The sequence spans 184 residues: Cobalamin adenosyltransferase (184 aa).

A disordered region spans residues 1–21; that stretch reads MGNRLSKIATRTGDAGTTGLG. ATP-binding positions include 10–13, 18–19, Lys28, 130–134, and Asn154; these read TRTG, TG, and RRAER.

This sequence belongs to the Cob(I)alamin adenosyltransferase family. As to quaternary structure, homotrimer.

The catalysed reaction is 2 cob(II)alamin + AH2 + 2 ATP = 2 adenosylcob(III)alamin + 2 triphosphate + A + 2 H(+). With respect to regulation, is potentially allosterically regulated by GTP/GDP, which enhances its affinity for AdoCbl by 5-fold. Binds cob(II)alamin weakly in the absence of ATP. The presence of ATP (but not GTP or GDP) increases the affinity of cob(II)alamin for the enzyme, and stoichiometric binding is observed. GTP blocks the transfer of cob(II)alamin to IcmF from ATR, thus averting its reconstitution with inactive cofactor. Its function is as follows. Adenosyltransferase that catalyzes the conversion of cob(II)alamin to adenosylcob(III)alamin (AdoCbl) in the presence of ATP and an electron donor. Acts as an accessory protein of IcmF that functions in cofactor repair, since IcmF is prone to inactivation during catalytic turnover due to the occasional loss of the 5'-deoxyadenosine moiety and formation of the inactive cob(II)alamin cofactor in its active site. Thus, receives and repairs the inactive cofactor, which is then reloaded onto IcmF in a GTPase-gated step. This Cupriavidus metallidurans (strain ATCC 43123 / DSM 2839 / NBRC 102507 / CH34) (Ralstonia metallidurans) protein is Cobalamin adenosyltransferase.